The following is an 89-amino-acid chain: Small ribosomal subunit protein bS16c (89 aa).

This sequence belongs to the bacterial ribosomal protein bS16 family.

It localises to the plastid. Its subcellular location is the chloroplast. This Morus indica (Mulberry) protein is Small ribosomal subunit protein bS16c.